A 428-amino-acid chain; its full sequence is Histidinol dehydrogenase (428 aa).

Residues Tyr-124, Gln-186, and Asn-209 each coordinate NAD(+). Substrate is bound by residues Ser-233, Gln-255, and His-258. Zn(2+) is bound by residues Gln-255 and His-258. Active-site proton acceptor residues include Glu-322 and His-323. The substrate site is built by His-323, Asp-356, Glu-410, and His-415. Asp-356 is a binding site for Zn(2+). Position 415 (His-415) interacts with Zn(2+).

The protein belongs to the histidinol dehydrogenase family. It depends on Zn(2+) as a cofactor.

The catalysed reaction is L-histidinol + 2 NAD(+) + H2O = L-histidine + 2 NADH + 3 H(+). Its pathway is amino-acid biosynthesis; L-histidine biosynthesis; L-histidine from 5-phospho-alpha-D-ribose 1-diphosphate: step 9/9. Its function is as follows. Catalyzes the sequential NAD-dependent oxidations of L-histidinol to L-histidinaldehyde and then to L-histidine. This is Histidinol dehydrogenase from Bacteroides fragilis (strain ATCC 25285 / DSM 2151 / CCUG 4856 / JCM 11019 / LMG 10263 / NCTC 9343 / Onslow / VPI 2553 / EN-2).